The sequence spans 232 residues: Large ribosomal subunit protein uL1 (232 aa).

It belongs to the universal ribosomal protein uL1 family. Part of the 50S ribosomal subunit.

Binds directly to 23S rRNA. The L1 stalk is quite mobile in the ribosome, and is involved in E site tRNA release. In terms of biological role, protein L1 is also a translational repressor protein, it controls the translation of the L11 operon by binding to its mRNA. The sequence is that of Large ribosomal subunit protein uL1 from Sinorhizobium medicae (strain WSM419) (Ensifer medicae).